A 390-amino-acid polypeptide reads, in one-letter code: O-glycoside alpha-1,2-mannosyltransferase omh1 (390 aa).

Residue E279 is the Nucleophile of the active site.

This sequence belongs to the glycosyltransferase 15 family.

The protein resides in the endoplasmic reticulum. It is found in the golgi apparatus. In terms of biological role, mannosyltransferase involved in O-glycosylation of cell wall and secreted proteins. Plays a major role in extending alpha-1,2-linked mannose in the O-glycan pathway. In Schizosaccharomyces pombe (strain 972 / ATCC 24843) (Fission yeast), this protein is O-glycoside alpha-1,2-mannosyltransferase omh1 (omh1).